A 162-amino-acid chain; its full sequence is Serine-protein kinase RsbW (162 aa).

It belongs to the anti-sigma-factor family.

It carries out the reaction L-seryl-[protein] + ATP = O-phospho-L-seryl-[protein] + ADP + H(+). The catalysed reaction is L-threonyl-[protein] + ATP = O-phospho-L-threonyl-[protein] + ADP + H(+). Negative regulator of sigma-B activity. Phosphorylates and inactivates its specific antagonist protein, RsbV. Upon phosphorylation of RsbV, RsbW is released and binds to sigma-B, thereby blocking its ability to form an RNA polymerase holoenzyme (E-sigma-B). This is Serine-protein kinase RsbW from Bacillus pumilus (strain SAFR-032).